The chain runs to 447 residues: Serine/threonine-protein phosphatase 2A 55 kDa regulatory subunit B delta isoform (447 aa).

WD repeat units lie at residues 26–65 (AEADIISTVEFNCSGDLLATGDKGGRVVIFQREQENKSRP), 91–132 (EIEE…KRVE), 175–213 (AHTYHINSISVNSDHETYLSADDLRINLWHLEITDRSFN), 224–264 (ELTE…LCDR), 283–321 (EIISSISDVKFSNSGRYMMTRDYLSVKVWDLNMESRPVE), 338–379 (ENDC…DITL), and 414–447 (DFNKKILHTAWHPTDNIIAVAATNNLYIFQDKVN).

The protein belongs to the phosphatase 2A regulatory subunit B family. In terms of assembly, PP2A consists of a common heterodimeric core enzyme, composed of a 36 kDa catalytic subunit (subunit C) and a 65 kDa constant regulatory subunit (PR65 or subunit A), that associates with a variety of regulatory subunits. Proteins that associate with the core dimer include three families of regulatory subunits B (the R2/B/PR55/B55, R3/B''/PR72/PR130/PR59 and R5/B'/B56 families), the 48 kDa variable regulatory subunit, viral proteins, and cell signaling molecules. Interacts with ensa (when phosphorylated at 'Ser-67') and arpp19 (when phosphorylated at 'Ser-67'), leading to inhibit PP2A activity.

The protein resides in the cytoplasm. Its function is as follows. Substrate-recognition subunit of protein phosphatase 2A (PP2A) that plays a key role in cell cycle by controlling mitosis entry and exit. The activity of PP2A complexes containing ppp2r2d (PR55-delta) fluctuate during the cell cycle: the activity is high in interphase and low in mitosis. During mitosis, activity of PP2A is inhibited via interaction with phosphorylated ensa and arpp19 inhibitors. PP2A complexes containing ppp2r2d (PR55-delta) also regulate the activity of TGF-beta/Activin/Nodal signaling by restricting receptor activity. Within the PP2A complexes, the B regulatory subunits modulate substrate selectivity and catalytic activity, and may also direct the localization of the catalytic enzyme to a particular subcellular compartment. The sequence is that of Serine/threonine-protein phosphatase 2A 55 kDa regulatory subunit B delta isoform (ppp2r2d) from Xenopus tropicalis (Western clawed frog).